We begin with the raw amino-acid sequence, 116 residues long: Aspartate 1-decarboxylase (116 aa).

Residue serine 25 is the Schiff-base intermediate with substrate; via pyruvic acid of the active site. Position 25 is a pyruvic acid (Ser) (serine 25). A substrate-binding site is contributed by threonine 57. Tyrosine 58 functions as the Proton donor in the catalytic mechanism. 72–74 serves as a coordination point for substrate; the sequence is GAA.

It belongs to the PanD family. Heterooctamer of four alpha and four beta subunits. The cofactor is pyruvate. In terms of processing, is synthesized initially as an inactive proenzyme, which is activated by self-cleavage at a specific serine bond to produce a beta-subunit with a hydroxyl group at its C-terminus and an alpha-subunit with a pyruvoyl group at its N-terminus.

Its subcellular location is the cytoplasm. It carries out the reaction L-aspartate + H(+) = beta-alanine + CO2. Its pathway is cofactor biosynthesis; (R)-pantothenate biosynthesis; beta-alanine from L-aspartate: step 1/1. Catalyzes the pyruvoyl-dependent decarboxylation of aspartate to produce beta-alanine. This chain is Aspartate 1-decarboxylase, found in Helicobacter acinonychis (strain Sheeba).